Consider the following 641-residue polypeptide: MRISSSPSPALGSIVNQPTSGELAAETPLAKASLTQSGAGGGQAFVQFGQANDSPSSFSGTEQSGSSLMSLLTRSSSSESTSSVDQDSDQVSPMTSVSSTASASPTAASNPANAPSATDAAFLDNSEYSSPEALKRWEPMVANLPPEEREQAAKELNRPIAAAWMARENGPNAEKAMAFINANPALKTAVDVGKDGGNADGKITNKDLKAFAKNMEKAADNADKDVAKYMEDNPGADPQSLEMVRSAAVMRANMPLATAADPHHAVGAADKTDVDGNVSAEGLKALIKSNPGLSGTLKQSSNMWSQAGFLSQVDEAGLTGRKKAAHSPDQVFDASNMSEWIRKSAPKNGGQFASMLSDAATLNSVAGIDISKLNAQVFEKPKAYTGAQKAAVMIKLQQTQQSVIAGRDLRNTEKTEAGLNERIAQLQADPDVQEYLNKSIPEQERSLVRSDSALQKAVTEQAQNVNSGKALQTDLATADKAVDKHNPDPDYSGAITGLSAQLQLQKDLFPDAQVPTAQQVFNNQPDEVQTKIADSYVRNFSEGGALKQLLGQKKSDAGESLQTADNQKAAYESVLPADFVNGERESYTASTLSELQNSKKGRKLLEGKTDEEGALRWPSSSPSKVSEARRIQFGHGLRVSV.

Over residues 1-20 the composition is skewed to polar residues; that stretch reads MRISSSPSPALGSIVNQPTS. Disordered stretches follow at residues 1 to 127 and 598 to 628; these read MRIS…DNSE and SKKGRKLLEGKTDEEGALRWPSSSPSKVSEA. Residues 44 to 121 show a composition bias toward low complexity; the sequence is AFVQFGQAND…ANAPSATDAA (78 aa). Basic and acidic residues predominate over residues 603-614; the sequence is KLLEGKTDEEGA.

In Pseudomonas syringae pv. syringae, this protein is Pathogenicity locus protein HrpK (hrpK).